A 514-amino-acid chain; its full sequence is Probable peptidoglycan glycosyltransferase FtsW (514 aa).

9 consecutive transmembrane segments (helical) span residues 45–65, 86–106, 108–128, 137–157, 182–202, 218–238, 301–321, 347–367, and 373–393; these read IGLIIVALALMTIGIIIVTSA, IYIVGAIIAAMVVLELPMQFW, TANPYLLLAAIGLLVAVLLVG, WLALGPITIQAAEPAKLFFFT, VVFFALAMLLLLQPDLGTVVV, LWQFFALVFAGVLAVVALIVF, ILAEELGFVGVLAVLGLILWM, VGIWFSFQTAVNIGASAGILP, and LPLVSYGGSSLIVMSVAVALL. Disordered stretches follow at residues 411-437 and 449-501; these read GDNKRTSKAKAKPSAKSAAKPAVRTKH and DYNQ…AGIK.

The protein belongs to the SEDS family. FtsW subfamily.

It is found in the cell inner membrane. It carries out the reaction [GlcNAc-(1-&gt;4)-Mur2Ac(oyl-L-Ala-gamma-D-Glu-L-Lys-D-Ala-D-Ala)](n)-di-trans,octa-cis-undecaprenyl diphosphate + beta-D-GlcNAc-(1-&gt;4)-Mur2Ac(oyl-L-Ala-gamma-D-Glu-L-Lys-D-Ala-D-Ala)-di-trans,octa-cis-undecaprenyl diphosphate = [GlcNAc-(1-&gt;4)-Mur2Ac(oyl-L-Ala-gamma-D-Glu-L-Lys-D-Ala-D-Ala)](n+1)-di-trans,octa-cis-undecaprenyl diphosphate + di-trans,octa-cis-undecaprenyl diphosphate + H(+). Its pathway is cell wall biogenesis; peptidoglycan biosynthesis. In terms of biological role, peptidoglycan polymerase that is essential for cell division. This Alteromonas naphthalenivorans protein is Probable peptidoglycan glycosyltransferase FtsW.